Here is a 72-residue protein sequence, read N- to C-terminus: uncharacterized protein (72 aa).

This is an uncharacterized protein from Vaccinia virus (strain Copenhagen) (VACV).